Consider the following 86-residue polypeptide: Small ribosomal subunit protein bS20 (86 aa).

Belongs to the bacterial ribosomal protein bS20 family.

In terms of biological role, binds directly to 16S ribosomal RNA. In Aliarcobacter butzleri (strain RM4018) (Arcobacter butzleri), this protein is Small ribosomal subunit protein bS20.